A 768-amino-acid chain; its full sequence is MKMAPQNADPESMQVQELSVPLPDPQKAGGAEAENCETISEGSIDRIPMRLWVMHGAVMFGREFCYAMETALVTPILLQIGLPEQYYSLTWFLSPILGLIFTPLIGSASDRCTLSWGRRRPFILALCVGVLFGVALFLNGSAIGLALGDVPNRQPIGIVLTVLGVVVLDFSADATEGPIRAYLLDVVDSEEQDMALNIHAFSAGLGGAIGYVLGGLDWTQTFLGSWFRTQNQVLFFFAAIIFTVSVALHLFSIDEEQYSPQQERSAEEPGALDGGEPHGVPAFPDEVQSEHELALDYPDVDIMRSKSDSALHVPDTALDLEPELLFLHDIEPSIFHDASYPATPRSTSQELAKTKLPRLATFLKEAAKEDETLLDNHLNEAKVPNGSGSPTKDALGGYTRVDTKPSATSSSMRRRRHAFRRQASSTFSYYGKLGSHCYRYRRANAVVLIKPSRSMSDLYDMQKRQRQHRHRNQSGATTSSGDTESEEGEGETTVRLLWLSMLKMPRELMRLCLCHLLTWFSVIAEAVFYTDFMGQVIFEGDPKAPSNSTAWQAYNAGVKMGCWGLVIYAATGAICSALLQKYLDNYDLSVRVIYVLGTLGFSVGTAVMAMFPNVYVAMVTISTMGIVSMSISYCPYALLGQYHDIKQYIHHSPGNSKRGFGIDCAILSCQVYISQILVASALGGVVDAVGTVRVIPMVASVGSFLGFLTATFLVIYPNVSEEAKEEQKGLSSPLAGEGRAGGNSEKPTVLKLTRKEGLQGPVETESVV.

The tract at residues 1-32 (MKMAPQNADPESMQVQELSVPLPDPQKAGGAE) is disordered. 6 consecutive transmembrane segments (helical) span residues 63–83 (EFCY…IGLP), 86–106 (YYSL…PLIG), 123–143 (ILAL…GSAI), 155–175 (PIGI…ADAT), 196–216 (LNIH…LGGL), and 233–253 (VLFF…LFSI). Disordered stretches follow at residues 259–284 (SPQQ…PAFP) and 379–419 (NEAK…RHAF). 2 positions are modified to phosphoserine: serine 424 and serine 454. A disordered region spans residues 460–489 (DMQKRQRQHRHRNQSGATTSSGDTESEEGE). Residues 473–482 (QSGATTSSGD) are compositionally biased toward low complexity. Serine 485 carries the post-translational modification Phosphoserine. A run of 6 helical transmembrane segments spans residues 518 to 538 (TWFS…QVIF), 560 to 580 (MGCW…ALLQ), 592 to 612 (VIYV…AMFP), 614 to 634 (VYVA…ISYC), 666 to 686 (ILSC…GGVV), and 695 to 715 (IPMV…FLVI). The disordered stretch occupies residues 726 to 768 (EQKGLSSPLAGEGRAGGNSEKPTVLKLTRKEGLQGPVETESVV). Position 732 is a phosphoserine (serine 732).

It belongs to the glycoside-pentoside-hexuronide (GPH) cation symporter transporter (TC 2.A.2) family.

Its subcellular location is the membrane. The catalysed reaction is sucrose(out) + H(+)(out) = sucrose(in) + H(+)(in). Its function is as follows. Proton-associated sucrose transporter. May be able to transport also glucose and fructose. The chain is Solute carrier family 45 member 4 from Homo sapiens (Human).